A 335-amino-acid polypeptide reads, in one-letter code: Methionine aminopeptidase 1D, mitochondrial (335 aa).

A mitochondrion-targeting transit peptide spans 1 to 19 (MAAPSGVHLLVRRGSHRIF). Position 161 (H161) interacts with substrate. D178, D189, and H252 together coordinate a divalent metal cation. Residue H259 coordinates substrate. Residues E284 and E315 each contribute to the a divalent metal cation site.

It belongs to the peptidase M24A family. Methionine aminopeptidase type 1 subfamily. It depends on Co(2+) as a cofactor. The cofactor is Zn(2+). Requires Mn(2+) as cofactor. Fe(2+) serves as cofactor. Overexpressed in colon cancer cell lines and colon tumors as compared to normal tissues (at protein level).

The protein resides in the mitochondrion. The enzyme catalyses Release of N-terminal amino acids, preferentially methionine, from peptides and arylamides.. In terms of biological role, removes the N-terminal methionine from nascent proteins. The N-terminal methionine is often cleaved when the second residue in the primary sequence is small and uncharged (Met-Ala-, Cys, Gly, Pro, Ser, Thr, or Val). Requires deformylation of the N(alpha)-formylated initiator methionine before it can be hydrolyzed. May play a role in colon tumorigenesis. This chain is Methionine aminopeptidase 1D, mitochondrial (METAP1D), found in Homo sapiens (Human).